The following is a 142-amino-acid chain: uncharacterized protein (142 aa).

It belongs to the IIV-6 115R family.

This is an uncharacterized protein from Invertebrate iridescent virus 3 (IIV-3).